A 301-amino-acid polypeptide reads, in one-letter code: Ornithine carbamoyltransferase (301 aa).

Carbamoyl phosphate-binding positions include R100 and H127–Q130. L-ornithine contacts are provided by residues N158, D221, and S225–M226. Carbamoyl phosphate contacts are provided by C260 and R288.

Belongs to the aspartate/ornithine carbamoyltransferase superfamily. OTCase family. As to quaternary structure, homododecamer.

Its subcellular location is the cytoplasm. The enzyme catalyses carbamoyl phosphate + L-ornithine = L-citrulline + phosphate + H(+). Its pathway is amino-acid biosynthesis; L-arginine biosynthesis; L-arginine from L-ornithine and carbamoyl phosphate: step 1/3. Its function is as follows. Reversibly catalyzes the transfer of the carbamoyl group from carbamoyl phosphate (CP) to the N(epsilon) atom of ornithine (ORN) to produce L-citrulline. The chain is Ornithine carbamoyltransferase (argF) from Moritella profunda.